The chain runs to 315 residues: Lipoyl synthase (315 aa).

Positions 62, 67, 73, 88, 92, 95, and 302 each coordinate [4Fe-4S] cluster. The region spanning 73-291 (CFGHGTATFM…GELAKKLGFS (219 aa)) is the Radical SAM core domain.

Belongs to the radical SAM superfamily. Lipoyl synthase family. [4Fe-4S] cluster is required as a cofactor.

The protein localises to the cytoplasm. The enzyme catalyses [[Fe-S] cluster scaffold protein carrying a second [4Fe-4S](2+) cluster] + N(6)-octanoyl-L-lysyl-[protein] + 2 oxidized [2Fe-2S]-[ferredoxin] + 2 S-adenosyl-L-methionine + 4 H(+) = [[Fe-S] cluster scaffold protein] + N(6)-[(R)-dihydrolipoyl]-L-lysyl-[protein] + 4 Fe(3+) + 2 hydrogen sulfide + 2 5'-deoxyadenosine + 2 L-methionine + 2 reduced [2Fe-2S]-[ferredoxin]. It functions in the pathway protein modification; protein lipoylation via endogenous pathway; protein N(6)-(lipoyl)lysine from octanoyl-[acyl-carrier-protein]: step 2/2. In terms of biological role, catalyzes the radical-mediated insertion of two sulfur atoms into the C-6 and C-8 positions of the octanoyl moiety bound to the lipoyl domains of lipoate-dependent enzymes, thereby converting the octanoylated domains into lipoylated derivatives. This chain is Lipoyl synthase, found in Coxiella burnetii (strain CbuG_Q212) (Coxiella burnetii (strain Q212)).